The following is a 227-amino-acid chain: MAYTFQLGLQDATSPIMEELTNFHDHTLMIVFLISSLVLYVISLMLTTKLTHTNTMDAQEVETIWTILPAVILILIALPSLRILYMMDEINNPVLTVKTMGHQWYWSYEYTDYEDLCFDSYMIPTNDLKPGELRLLEVDNRVVLPMELPIRMLISSEDVLHSWAVPSLGLKTDAIPGRLNQATVTSNRPGLFYGQCSEICGSNHSFMPIVLEMVPLKHFENWSASMI.

Residues Met1–Ser14 are Mitochondrial intermembrane-facing. The chain crosses the membrane as a helical span at residues Pro15–Met45. Residues Leu46–Gln59 are Mitochondrial matrix-facing. A helical membrane pass occupies residues Glu60–Met87. Topologically, residues Asp88–Ile227 are mitochondrial intermembrane. Positions 161, 196, 198, 200, 204, and 207 each coordinate Cu cation. Mg(2+) is bound at residue Glu198.

Belongs to the cytochrome c oxidase subunit 2 family. In terms of assembly, component of the cytochrome c oxidase (complex IV, CIV), a multisubunit enzyme composed of 14 subunits. The complex is composed of a catalytic core of 3 subunits MT-CO1, MT-CO2 and MT-CO3, encoded in the mitochondrial DNA, and 11 supernumerary subunits COX4I, COX5A, COX5B, COX6A, COX6B, COX6C, COX7A, COX7B, COX7C, COX8 and NDUFA4, which are encoded in the nuclear genome. The complex exists as a monomer or a dimer and forms supercomplexes (SCs) in the inner mitochondrial membrane with NADH-ubiquinone oxidoreductase (complex I, CI) and ubiquinol-cytochrome c oxidoreductase (cytochrome b-c1 complex, complex III, CIII), resulting in different assemblies (supercomplex SCI(1)III(2)IV(1) and megacomplex MCI(2)III(2)IV(2)). Found in a complex with TMEM177, COA6, COX18, COX20, SCO1 and SCO2. Interacts with TMEM177 in a COX20-dependent manner. Interacts with COX20. Interacts with COX16. It depends on Cu cation as a cofactor.

Its subcellular location is the mitochondrion inner membrane. It catalyses the reaction 4 Fe(II)-[cytochrome c] + O2 + 8 H(+)(in) = 4 Fe(III)-[cytochrome c] + 2 H2O + 4 H(+)(out). Functionally, component of the cytochrome c oxidase, the last enzyme in the mitochondrial electron transport chain which drives oxidative phosphorylation. The respiratory chain contains 3 multisubunit complexes succinate dehydrogenase (complex II, CII), ubiquinol-cytochrome c oxidoreductase (cytochrome b-c1 complex, complex III, CIII) and cytochrome c oxidase (complex IV, CIV), that cooperate to transfer electrons derived from NADH and succinate to molecular oxygen, creating an electrochemical gradient over the inner membrane that drives transmembrane transport and the ATP synthase. Cytochrome c oxidase is the component of the respiratory chain that catalyzes the reduction of oxygen to water. Electrons originating from reduced cytochrome c in the intermembrane space (IMS) are transferred via the dinuclear copper A center (CU(A)) of subunit 2 and heme A of subunit 1 to the active site in subunit 1, a binuclear center (BNC) formed by heme A3 and copper B (CU(B)). The BNC reduces molecular oxygen to 2 water molecules using 4 electrons from cytochrome c in the IMS and 4 protons from the mitochondrial matrix. The protein is Cytochrome c oxidase subunit 2 (MT-CO2) of Niviventer culturatus (Oldfield white-bellied rat).